The following is a 448-amino-acid chain: Fibulin-5 (448 aa).

The signal sequence occupies residues 1-23 (MPGIKRILTVTILALCLPSPGNA). The region spanning 42–82 (DIDECRTIPEACRGDMMCVNQNGRYLCIPRTNPVYRGPYSN) is the EGF-like 1; calcium-binding domain. 17 disulfides stabilise this stretch: Cys-46/Cys-59, Cys-53/Cys-68, Cys-131/Cys-144, Cys-138/Cys-153, Cys-155/Cys-166, Cys-172/Cys-181, Cys-177/Cys-190, Cys-192/Cys-205, Cys-211/Cys-221, Cys-217/Cys-230, Cys-232/Cys-245, Cys-251/Cys-262, Cys-258/Cys-271, Cys-273/Cys-286, Cys-292/Cys-305, Cys-299/Cys-314, and Cys-320/Cys-332. Residues 54-56 (RGD) carry the Cell attachment site motif. Residues 127-167 (DVDECATDSHQCNPTQICINTEGGYTCSCTDGYWLLEGQCL) form the EGF-like 2; calcium-binding domain. Residues 168–206 (DIDECRYGYCQQLCANVPGSYSCTCNPGFTLNEDGRSCQ) form the EGF-like 3; calcium-binding domain. In terms of domain architecture, EGF-like 4; calcium-binding spans 207–246 (DVNECATENPCVQTCVNTYGSFICRCDPGYELEEDGVHCS). Residues 245-448 (CSDMDECSFS…LRIYVSQYPF (204 aa)) are interaction with LOXL1. The region spanning 247–287 (DMDECSFSEFLCQHECVNQPGTYFCSCPPGYILLDDNRSCQ) is the EGF-like 5; calcium-binding domain. N-linked (GlcNAc...) asparagine glycans are attached at residues Asn-283 and Asn-296. Residues 288–333 (DINECEHRNHTCNLQQTCYNLQGGFKCIDPIRCEEPYLRISDNRCM) form the EGF-like 6; calcium-binding domain.

The protein belongs to the fibulin family. As to quaternary structure, homodimer. Monomer, homodimerizes in presence of Ca(2+). Interacts with ELN. Interacts (via N-terminus) with the integrins ITGAV/ITGB3, ITGAV/ITGB5 and ITGA9/ITGB1. Interacts with FBN1 (via N-terminal domain). Forms a ternary complex with ELN and FBN1. Interacts with EFEMP2 with moderate affinity. Interacts with LOXL1. N-glycosylated.

The protein localises to the secreted. It localises to the extracellular space. It is found in the extracellular matrix. Functionally, essential for elastic fiber formation, is involved in the assembly of continuous elastin (ELN) polymer and promotes the interaction of microfibrils and ELN. Stabilizes and organizes elastic fibers in the skin, lung and vasculature. Promotes adhesion of endothelial cells through interaction of integrins and the RGD motif. Vascular ligand for integrin receptors which may play a role in vascular development and remodeling. May act as an adapter that mediates the interaction between FBN1 and ELN. In Pongo abelii (Sumatran orangutan), this protein is Fibulin-5 (FBLN5).